The sequence spans 345 residues: Phosphoribosylformylglycinamidine cyclo-ligase (345 aa).

It belongs to the AIR synthase family.

It is found in the cytoplasm. The enzyme catalyses 2-formamido-N(1)-(5-O-phospho-beta-D-ribosyl)acetamidine + ATP = 5-amino-1-(5-phospho-beta-D-ribosyl)imidazole + ADP + phosphate + H(+). The protein operates within purine metabolism; IMP biosynthesis via de novo pathway; 5-amino-1-(5-phospho-D-ribosyl)imidazole from N(2)-formyl-N(1)-(5-phospho-D-ribosyl)glycinamide: step 2/2. In Escherichia coli (strain 55989 / EAEC), this protein is Phosphoribosylformylglycinamidine cyclo-ligase.